The primary structure comprises 463 residues: Autophagy-related protein 36 (463 aa).

Residues 5–45 (CSICLEVLVDKEAFTEPCLHYYHNECIKEWTKRANTCPKCR) form an RING-type; atypical zinc finger. A PHD-type zinc finger spans residues 85–131 (TNLCALCEDPSTSLIYCESCGGSFHFNCIGIGDELDSEWCCPLCGMF). A compositionally biased stretch (polar residues) spans 229–242 (TQNSQSSEFSTENN). The disordered stretch occupies residues 229–281 (TQNSQSSEFSTENNVVPLKNTHELGRKLKKPRRASGIKKNVVERSSSHQSTQI). Residues 255–264 (KLKKPRRASG) are compositionally biased toward basic residues.

As to quaternary structure, interacts with ATG28.

Functionally, micropexophagy-specific protein required for efficient micropexophagic apparatus (MIPA) formation but not for general autophagy. This is Autophagy-related protein 36 (ATG35) from Komagataella phaffii (strain GS115 / ATCC 20864) (Yeast).